Here is a 439-residue protein sequence, read N- to C-terminus: MAGAMVSIVGRPNVGKSTLFNKIMGKRISIVEDKPGVTRDRIYGNVEWLDKKFILVDTGGLDPNAEDILFSKVRLQVEAAIDASDVILFLVDAKEGLMPEDEEIANILRRAKKEVILVCNKVDSFKEMPPTYYDFFSLGLGNPIPISASNGLGIGELLDEVVKKLPQEELEYTEETIKIAVIGKPNVGKSSLVNKILGEERVIVSNIPGTTRDAIDTPFSKDGKNYVLIDTAGIRRKSRISESIERYSVLRALAAIERSDICLLMIDATEGPTEQDTKIAGYAFENGKGIIIVVNKWDAIKKDNNTVNEYTKMVREKLSFISFAPILFISAKTGQRVHRVLETVDKVWEEYNKRITTGLLNNVLNEAMLMFPPPADKGKPLKVYYTSQVGIKPPSFVVFVNEPELMHFSYLRFIENTLRQNFGFEGVPVVISTRKRGEN.

2 EngA-type G domains span residues 4 to 169 (AMVS…PQEE) and 177 to 352 (IKIA…EEYN). GTP is bound by residues 10 to 17 (GRPNVGKS), 57 to 61 (DTGGL), 120 to 123 (NKVD), 183 to 190 (GKPNVGKS), 230 to 234 (DTAGI), and 295 to 298 (NKWD). The KH-like domain maps to 353 to 437 (KRITTGLLNN…PVVISTRKRG (85 aa)).

Belongs to the TRAFAC class TrmE-Era-EngA-EngB-Septin-like GTPase superfamily. EngA (Der) GTPase family. As to quaternary structure, associates with the 50S ribosomal subunit.

GTPase that plays an essential role in the late steps of ribosome biogenesis. The sequence is that of GTPase Der from Thermoanaerobacter pseudethanolicus (strain ATCC 33223 / 39E) (Clostridium thermohydrosulfuricum).